Here is a 153-residue protein sequence, read N- to C-terminus: Carbohydrate-binding protein AWN (153 aa).

An N-terminal signal peptide occupies residues 1 to 20 (MKLAAPSLALLLSTATLVSG). Ala-21 carries the post-translational modification N-acetylalanine. Disulfide bonds link Cys-29–Cys-50 and Cys-73–Cys-94. The 102-residue stretch at 29–130 (CGGVLRDPPG…SPFHIYYYAD (102 aa)) folds into the CUB domain. The heparin-binding stretch occupies residues 93–130 (ICGGISLVFRSSSNIATIKYLRTSGQRASPFHIYYYAD).

This sequence belongs to the spermadhesin family. Post-translationally, partial N-acetylation differentiates isoforms AWN-1 (not acetylated) and AWN-2 (acetylated).

It localises to the secreted. Functionally, AWN proteins mediate the binding of boar spermatozoa to component(s) of the egg's zona pellucida by a carbohydrate-binding mechanism. Awn proteins are secretory components of the male accessory glands being coated to the sperm surface at the time of ejaculation. They possess as well heparin-, serine-protease-inhibitor-binding capability. The protein is Carbohydrate-binding protein AWN of Sus scrofa (Pig).